A 577-amino-acid polypeptide reads, in one-letter code: F-box/TPR repeat protein pof3 (577 aa).

TPR repeat units follow at residues 6–39 (VKAI…EPNP), 41–74 (IDLF…NARN), and 76–108 (RGYL…VHKM). The F-box domain occupies 138 to 180 (ILPREVLLCILQQLNFKSIVQCMQVCKHWRDCIKKEPSLFCCL).

As to quaternary structure, a part of the E3 ubiquitin ligase Skp1-Cullin-1-F-box (SCF) complex. Interacts with cul1, mcl1 and skp1.

It localises to the mitochondrion. It is found in the nucleus. Has a role in substrate recognition in the Skp1-Cullin-1/Cdc53-F-box (SCF) ubiquitin ligase complex. Required for the maintenance of telomere length and transcriptional silencing at the telomere. Also required for chromosome segregation. The polypeptide is F-box/TPR repeat protein pof3 (pof3) (Schizosaccharomyces pombe (strain 972 / ATCC 24843) (Fission yeast)).